The sequence spans 472 residues: F-box protein At3g03040 (472 aa).

The F-box domain maps to 1–49 (MDLLSSLPDEVRCLILSFLTTKESASTSVLSKKWRNLFALVPNLDFDDS).

The polypeptide is F-box protein At3g03040 (Arabidopsis thaliana (Mouse-ear cress)).